The sequence spans 298 residues: tRNA(Met) cytidine acetate ligase (298 aa).

ATP-binding positions include I6–Q19, G100, N157, and R182.

Belongs to the TmcAL family.

It is found in the cytoplasm. The catalysed reaction is cytidine(34) in elongator tRNA(Met) + acetate + ATP = N(4)-acetylcytidine(34) in elongator tRNA(Met) + AMP + diphosphate. Its function is as follows. Catalyzes the formation of N(4)-acetylcytidine (ac(4)C) at the wobble position of elongator tRNA(Met), using acetate and ATP as substrates. First activates an acetate ion to form acetyladenylate (Ac-AMP) and then transfers the acetyl group to tRNA to form ac(4)C34. This is tRNA(Met) cytidine acetate ligase from Mycoplasmopsis pulmonis (strain UAB CTIP) (Mycoplasma pulmonis).